A 201-amino-acid polypeptide reads, in one-letter code: MALKDRFDKIISYFDTDDVSENEVHEVQERTSVQRDSRAATAQEASQRSHMTNSAEEEMIGSRPRTSTYNPNRQERQRVQRDNSYQQATPRIQNKDSVRQQREQVTIALKYPRKYEDAQEIVDLLIVNECVLIDFQYMLDAQARRCLDYIDGASRVLYGSLQKVGSSMFLLTPANVMVDIEEMNIPKTGQETSFDFDMKRR.

The segment covering valine 27–arginine 38 has biased composition (basic and acidic residues). The interval valine 27–arginine 99 is disordered. Composition is skewed to polar residues over residues glutamine 43–serine 54 and aspartate 82–isoleucine 92.

This sequence belongs to the SepF family. In terms of assembly, homodimer. Interacts with FtsZ.

It localises to the cytoplasm. Functionally, cell division protein that is part of the divisome complex and is recruited early to the Z-ring. Probably stimulates Z-ring formation, perhaps through the cross-linking of FtsZ protofilaments. Its function overlaps with FtsA. The polypeptide is Cell division protein SepF (Streptococcus agalactiae serotype III (strain NEM316)).